Here is a 177-residue protein sequence, read N- to C-terminus: Anti-apoptotic protein NR13 (177 aa).

The BH1 motif lies at 75–94; sequence LETDGGLNWGRLLALVVFAG. Residues 86–106 traverse the membrane as a helical segment; sequence LLALVVFAGTLAAALAESACE. The BH2 signature appears at 126–141; the sequence is EWMEEHGGWDGFCRFF. A helical transmembrane segment spans residues 156-176; that stretch reads SNAIMAAAGFGIAGLAFLLVV.

Belongs to the Bcl-2 family. As to quaternary structure, interacts with BAX. Mainly expressed in neural and muscular tissues.

The protein localises to the cell membrane. Its function is as follows. Shows anti-apoptotic properties. Counteract the pro-apoptotic activity of BAX. The chain is Anti-apoptotic protein NR13 (NR13) from Coturnix japonica (Japanese quail).